Reading from the N-terminus, the 297-residue chain is Iron/alpha-ketoglutarate-dependent dioxygenase ausU (297 aa).

3 residues coordinate Fe cation: H130, D132, and H206.

The protein belongs to the PhyH family. As to quaternary structure, homodimer. The cofactor is Fe cation.

Its pathway is secondary metabolite biosynthesis; terpenoid biosynthesis. Iron/alpha-ketoglutarate-dependent dioxygenase; part of the gene cluster that mediates the biosynthesis of calidodehydroaustin, a fungal meroterpenoid. The first step of the pathway is the synthesis of 3,5-dimethylorsellinic acid by the polyketide synthase ausA. 3,5-dimethylorsellinic acid is then prenylated by the polyprenyl transferase ausN. Further epoxidation by the FAD-dependent monooxygenase ausM and cyclization by the probable terpene cyclase ausL lead to the formation of protoaustinoid A. Protoaustinoid A is then oxidized to spiro-lactone preaustinoid A3 by the combined action of the FAD-binding monooxygenases ausB and ausC, and the dioxygenase ausE. Acid-catalyzed keto-rearrangement and ring contraction of the tetraketide portion of preaustinoid A3 by ausJ lead to the formation of preaustinoid A4. The aldo-keto reductase ausK, with the help of ausH, is involved in the next step by transforming preaustinoid A4 into isoaustinone which is in turn hydroxylated by the P450 monooxygenase ausI to form austinolide. The cytochrome P450 monooxygenase ausG modifies austinolide to austinol. Austinol is further acetylated to austin by the O-acetyltransferase ausP, which spontaneously changes to dehydroaustin. The cytochrome P450 monooxygenase ausR then converts dehydroaustin is into 7-dehydrodehydroaustin. The hydroxylation catalyzed by ausR permits the O-acetyltransferase ausQ to add an additional acetyl group to the molecule, leading to the formation of acetoxydehydroaustin. The short chain dehydrogenase ausT catalyzes the reduction of the double bond present between carbon atoms 1 and 2 to convert 7-dehydrodehydroaustin into 1,2-dihydro-7-hydroxydehydroaustin. AusQ catalyzes not only an acetylation reaction but also the addition of the PKS ausV diketide product to 1,2-dihydro-7-hydroxydehydroaustin, forming precalidodehydroaustin. Finally, the iron/alpha-ketoglutarate-dependent dioxygenase converts precalidodehydroaustin into calidodehydroaustin. This is Iron/alpha-ketoglutarate-dependent dioxygenase ausU from Aspergillus calidoustus.